The following is a 121-amino-acid chain: Basic phospholipase A2 homolog AppP2 (121 aa).

7 disulfides stabilise this stretch: cysteine 26–cysteine 115, cysteine 28–cysteine 44, cysteine 43–cysteine 95, cysteine 49–cysteine 121, cysteine 50–cysteine 88, cysteine 57–cysteine 81, and cysteine 75–cysteine 86. The important for membrane-damaging activities in eukaryotes and bacteria; heparin-binding stretch occupies residues 105 to 117 (KKYKAYFKLKCKK).

The protein belongs to the phospholipase A2 family. Group II subfamily. K49 sub-subfamily. Monomer. Expressed by the venom gland.

The protein localises to the secreted. In terms of biological role, snake venom phospholipase A2 (PLA2) that lacks enzymatic activity. Displays edema-inducing activities. Is myotoxic. A model of myotoxic mechanism has been proposed: an apo Lys49-PLA2 is activated by the entrance of a hydrophobic molecule (e.g. fatty acid) at the hydrophobic channel of the protein leading to a reorientation of a monomer. This reorientation causes a transition between 'inactive' to 'active' states, causing alignment of C-terminal and membrane-docking sites (MDoS) side-by-side and putting the membrane-disruption sites (MDiS) in the same plane, exposed to solvent and in a symmetric position for both monomers. The MDoS region stabilizes the toxin on membrane by the interaction of charged residues with phospholipid head groups. Subsequently, the MDiS region destabilizes the membrane with penetration of hydrophobic residues. This insertion causes a disorganization of the membrane, allowing an uncontrolled influx of ions (i.e. calcium and sodium), and eventually triggering irreversible intracellular alterations and cell death. The sequence is that of Basic phospholipase A2 homolog AppP2 from Agkistrodon piscivorus piscivorus (Eastern cottonmouth).